Here is a 136-residue protein sequence, read N- to C-terminus: Histone H3.3 (136 aa).

The segment at 1–42 is disordered; sequence MARTKQTARKSTGGKAPRKQLASKAARKSAPVSGGVKKPHRY. An N6,N6,N6-trimethyllysine; alternate modification is found at Lys-5. At Lys-5 the chain carries N6,N6-dimethyllysine; alternate. Lys-5 and Lys-10 each carry N6-methyllysine; alternate. Residue Lys-10 is modified to N6-acetyllysine; alternate. Ser-11 is modified (phosphoserine). At Lys-15 the chain carries N6,N6-dimethyllysine; alternate. Lys-15, Lys-19, Lys-24, Lys-28, and Lys-37 each carry N6-acetyllysine; alternate. An N6-methyllysine; alternate mark is found at Lys-19, Lys-24, Lys-28, and Lys-37. Residues Lys-28 and Lys-37 each carry the N6,N6,N6-trimethyllysine; alternate modification. N6,N6-dimethyllysine; alternate is present on residues Lys-28 and Lys-37. N6-acetyllysine is present on residues Lys-57 and Lys-65. Lys-80 carries the post-translational modification N6,N6,N6-trimethyllysine; alternate. The residue at position 80 (Lys-80) is an N6,N6-dimethyllysine; alternate. Lys-80 carries the post-translational modification N6-methyllysine; alternate.

It belongs to the histone H3 family. In terms of assembly, the nucleosome is a histone octamer containing two molecules each of H2A, H2B, H3 and H4 assembled in one H3-H4 heterotetramer and two H2A-H2B heterodimers. The octamer wraps approximately 147 bp of DNA. Phosphorylated by IPL1 to form H3S10ph. H3S10ph promotes subsequent H3K14ac formation and is required for transcriptional activation through TBP recruitment to the promoters. In terms of processing, mono-, di- and trimethylated by the COMPASS complex to form H3K4me1/2/3. H3K4me activates gene expression by regulating transcription elongation and plays a role in telomere length maintenance. H3K4me enrichment correlates with transcription levels, and occurs in a 5' to 3' gradient with H3K4me3 enrichment at the 5'-end of genes, shifting to H3K4me2 and then H3K4me1. Methylated by SET2 to form H3K36me. H3K36me represses gene expression. Methylated by DOT1 to form H3K79me. H3K79me is required for association of SIR proteins with telomeric regions and for telomeric silencing. The COMPASS-mediated formation of H3K4me2/3 and the DOT1-mediated formation of H3K79me require H2BK123ub1. Post-translationally, acetylation of histone H3 leads to transcriptional activation. H3K14ac formation by GCN5 is promoted by H3S10ph. H3K14ac can also be formed by ESA1. H3K56ac formation occurs predominantly in newly synthesized H3 molecules during G1, S and G2/M of the cell cycle and may be involved in DNA repair.

The protein resides in the nucleus. It is found in the chromosome. In terms of biological role, core component of nucleosome. Nucleosomes wrap and compact DNA into chromatin, limiting DNA accessibility to the cellular machineries which require DNA as a template. Histones thereby play a central role in transcription regulation, DNA repair, DNA replication and chromosomal stability. DNA accessibility is regulated via a complex set of post-translational modifications of histones, also called histone code, and nucleosome remodeling. In Candida albicans (strain SC5314 / ATCC MYA-2876) (Yeast), this protein is Histone H3.3 (HHT3).